The following is a 148-amino-acid chain: Lysozyme C, milk isozyme (148 aa).

Positions 1-18 (MKALLIVGLLLLSVAVQG) are cleaved as a signal peptide. A C-type lysozyme domain is found at 19 to 148 (KKFQRCELAR…LRSYVQGCRV (130 aa)). 4 cysteine pairs are disulfide-bonded: Cys-24–Cys-146, Cys-48–Cys-134, Cys-83–Cys-99, and Cys-95–Cys-113. Residues Glu-53 and Asp-71 contribute to the active site.

Belongs to the glycosyl hydrolase 22 family.

The enzyme catalyses Hydrolysis of (1-&gt;4)-beta-linkages between N-acetylmuramic acid and N-acetyl-D-glucosamine residues in a peptidoglycan and between N-acetyl-D-glucosamine residues in chitodextrins.. Functionally, lysozymes have primarily a bacteriolytic function; those in tissues and body fluids are associated with the monocyte-macrophage system and enhance the activity of immunoagents. The polypeptide is Lysozyme C, milk isozyme (Bos taurus (Bovine)).